The sequence spans 81 residues: Small serum protein 4 (81 aa).

An N-terminal signal peptide occupies residues 1 to 19; the sequence is MKVFFILIIFSFTLATCQG. 3 disulfides stabilise this stretch: Cys-21–Cys-74, Cys-41–Cys-66, and Cys-64–Cys-73.

Belongs to the beta-microseminoprotein family.

It localises to the secreted. Functionally, shows an slight inhibitory effect toward the metalloproteinase brevilysin H6, but does not inhibit the metalloproteinases thermolysin, HR1A and HR1B. The protein is Small serum protein 4 of Protobothrops flavoviridis (Habu).